The sequence spans 252 residues: 3-dehydroquinate dehydratase (252 aa).

Residues 47-49 (EWR) and Arg83 contribute to the 3-dehydroquinate site. His144 functions as the Proton donor/acceptor in the catalytic mechanism. Catalysis depends on Lys171, which acts as the Schiff-base intermediate with substrate. Arg213, Ser232, and Gln236 together coordinate 3-dehydroquinate.

The protein belongs to the type-I 3-dehydroquinase family. Homodimer.

The enzyme catalyses 3-dehydroquinate = 3-dehydroshikimate + H2O. It participates in metabolic intermediate biosynthesis; chorismate biosynthesis; chorismate from D-erythrose 4-phosphate and phosphoenolpyruvate: step 3/7. Involved in the third step of the chorismate pathway, which leads to the biosynthesis of aromatic amino acids. Catalyzes the cis-dehydration of 3-dehydroquinate (DHQ) and introduces the first double bond of the aromatic ring to yield 3-dehydroshikimate. This chain is 3-dehydroquinate dehydratase, found in Lactiplantibacillus plantarum (strain ATCC BAA-793 / NCIMB 8826 / WCFS1) (Lactobacillus plantarum).